The following is a 1408-amino-acid chain: Protein patched homolog 1 (1408 aa).

Residues 1–20 (MLTLLEPPGAKRSPTVGNYN) form a disordered region. Over 1 to 136 (MLTLLEPPGA…GNTVHRNAWS (136 aa)) the chain is Cytoplasmic. Residues 137 to 157 (IILAVSMIFAVCCYGLQYVHI) traverse the membrane as a helical segment. Residues 158-649 (ETDIVKLWVA…STSIADMLEE (492 aa)) lie on the Extracellular side of the membrane. The segment at 455 to 479 (STAPIPTTTTLSPEEARAAEEKEKK) is disordered. Residues 468-479 (EEARAAEEKEKK) are compositionally biased toward basic and acidic residues. An N-linked (GlcNAc...) asparagine glycan is attached at N599. Residues 650 to 670 (FCQFNYTIILAGYALMLAYAI) form a helical membrane-spanning segment. The region spanning 654–816 (NYTIILAGYA…LTIYPAIISI (163 aa)) is the SSD domain. The Cytoplasmic segment spans residues 671-686 (VTQARFDNCLPATESS). Residues 687-707 (MGLALAGVLVVTFASVAGLGL) traverse the membrane as a helical segment. The Extracellular segment spans residues 708-709 (AT). A helical transmembrane segment spans residues 710 to 730 (WFGIEFNAATTQIVPFLTLGI). Residues 731–765 (GVDNMFMLLHNYRDVVKLAGGHAEMAILMRETGMS) are Cytoplasmic-facing. A helical transmembrane segment spans residues 766-786 (ILCTSINNILSFLTGTLLPIP). The Extracellular portion of the chain corresponds to 787-795 (ALRSFCAQS). The helical transmembrane segment at 796 to 816 (SILLTFNFIAILTIYPAIISI) threads the bilayer. Residues 817 to 901 (DLRRKKAQRR…YYYIPFISKP (85 aa)) are Cytoplasmic-facing. The helical transmembrane segment at 902–922 (ASKVAIIVGCCALLGASFIGM) threads the bilayer. At 923–1175 (RQSTLGLELG…QGIAFTFWEQ (253 aa)) the chain is on the extracellular side. Residues N1026 and N1036 are each glycosylated (N-linked (GlcNAc...) asparagine). A helical membrane pass occupies residues 1176–1196 (YLFLTGNLMQAISIITISVFC). Residues 1197–1217 (VISVLLFNPWAALMVVCILGI) are Cytoplasmic-facing. Helical transmembrane passes span 1218-1238 (MTCELAGFMGLVGIKLNPVSA) and 1239-1259 (VTLITAVGIGVEFTVHVVVSF). The Extracellular segment spans residues 1260–1276 (LTALGTRSQRTSSAVDR). Residues 1277–1297 (VFVPVIHGSFSTLLGILMLGF) form a helical membrane-spanning segment. Residues 1298–1305 (SEFEFVVK) are Cytoplasmic-facing. The helical transmembrane segment at 1306–1326 (YFFIVMTALICIGIINGLILL) threads the bilayer. The Extracellular segment spans residues 1327–1408 (PVLLSWFGPR…GNNTRRLPAV (82 aa)). The interval 1342–1408 (TGGKTTLTLP…GNNTRRLPAV (67 aa)) is disordered. The segment covering 1387-1408 (TTRTSGGNRGTVGNNTRRLPAV) has biased composition (low complexity).

It belongs to the patched family. As to expression, germ line and its progenitors.

The protein localises to the membrane. Required but not essential for cytokinesis of mitotically proliferating germ cells. The chain is Protein patched homolog 1 (ptc-1) from Caenorhabditis elegans.